The primary structure comprises 121 residues: Large ribosomal subunit protein uL14 (121 aa).

The protein belongs to the universal ribosomal protein uL14 family. Part of the 50S ribosomal subunit. Forms a cluster with proteins L3 and L19. In the 70S ribosome, L14 and L19 interact and together make contacts with the 16S rRNA in bridges B5 and B8.

Functionally, binds to 23S rRNA. Forms part of two intersubunit bridges in the 70S ribosome. The sequence is that of Large ribosomal subunit protein uL14 from Legionella pneumophila (strain Corby).